The chain runs to 434 residues: Mothers against decapentaplegic homolog 9 (434 aa).

Residues 16–140 (PAVKRLLGWK…YRRVETPVLP (125 aa)) form the MH1 domain. Zn(2+) contacts are provided by cysteine 68, cysteine 113, cysteine 125, and histidine 130. The tract at residues 171-222 (MPHNATYPDSFQQSLGPAPPSSPGHVFPQSPCPTSYPQSPGSPSESDSPYQH) is disordered. Positions 202–221 (CPTSYPQSPGSPSESDSPYQ) are enriched in polar residues. In terms of domain architecture, MH2 spans 236–434 (WCSVAYYELN…SPHNPISSVS (199 aa)).

This sequence belongs to the dwarfin/SMAD family. In terms of assembly, interaction with the co-SMAD SMAD4. Interacts with PEBP2-alpha subunit. Interacts with RANBP3L. Post-translationally, phosphorylated on serine by BMP (bone morphogenetic proteins) type 1 receptor kinase. Phosphorylated by activin type I receptor-like kinase-2 (ALK-2).

The protein localises to the cytoplasm. It localises to the nucleus. Transcriptional modulator activated by BMP (bone morphogenetic proteins) type 1 receptor kinase. SMAD9 is a receptor-regulated SMAD (R-SMAD). Has been shown to be activated by activin type I receptor-like kinase-2 (ALK-2) which stimulates heteromerization between SMAD9 and SMAD4. ALK-2 binds TGF-beta, activin and BMP. This is Mothers against decapentaplegic homolog 9 (Smad9) from Rattus norvegicus (Rat).